A 449-amino-acid chain; its full sequence is Tubulin alpha-1B chain (449 aa).

GTP is bound at residue Gln-11. Lys-40 is modified (N6-acetyllysine). 7 residues coordinate GTP: Glu-71, Ser-140, Gly-144, Thr-145, Thr-179, Asn-206, and Asn-228. Glu-71 provides a ligand contact to Mg(2+). The active site involves Glu-254.

Belongs to the tubulin family. In terms of assembly, dimer of alpha and beta chains. A typical microtubule is a hollow water-filled tube with an outer diameter of 25 nm and an inner diameter of 15 nM. Alpha-beta heterodimers associate head-to-tail to form protofilaments running lengthwise along the microtubule wall with the beta-tubulin subunit facing the microtubule plus end conferring a structural polarity. Microtubules usually have 13 protofilaments but different protofilament numbers can be found in some organisms and specialized cells. It depends on Mg(2+) as a cofactor. Acetylation of alpha chains at Lys-40 stabilizes microtubules and affects affinity and processivity of microtubule motors. This modification has a role in multiple cellular functions, ranging from cell motility, cell cycle progression or cell differentiation to intracellular trafficking and signaling.

The protein localises to the cytoplasm. Its subcellular location is the cytoskeleton. It localises to the spindle. The protein resides in the nucleus. It catalyses the reaction GTP + H2O = GDP + phosphate + H(+). In terms of biological role, tubulin is the major constituent of microtubules, a cylinder consisting of laterally associated linear protofilaments composed of alpha- and beta-tubulin heterodimers. Microtubules grow by the addition of GTP-tubulin dimers to the microtubule end, where a stabilizing cap forms. Below the cap, tubulin dimers are in GDP-bound state, owing to GTPase activity of alpha-tubulin. In Physarum polycephalum (Slime mold), this protein is Tubulin alpha-1B chain (ALTBN).